Reading from the N-terminus, the 211-residue chain is Uracil phosphoribosyltransferase (211 aa).

5-phospho-alpha-D-ribose 1-diphosphate is bound by residues R78, R103, and 130 to 138 (DPMLATGNS). Residues I193 and 198–200 (GDA) contribute to the uracil site. D199 contributes to the 5-phospho-alpha-D-ribose 1-diphosphate binding site.

The protein belongs to the UPRTase family. Requires Mg(2+) as cofactor.

It catalyses the reaction UMP + diphosphate = 5-phospho-alpha-D-ribose 1-diphosphate + uracil. The protein operates within pyrimidine metabolism; UMP biosynthesis via salvage pathway; UMP from uracil: step 1/1. Allosterically activated by GTP. In terms of biological role, catalyzes the conversion of uracil and 5-phospho-alpha-D-ribose 1-diphosphate (PRPP) to UMP and diphosphate. This is Uracil phosphoribosyltransferase from Acinetobacter baumannii (strain AB307-0294).